A 185-amino-acid polypeptide reads, in one-letter code: Small ribosomal subunit protein uS7 (185 aa).

It belongs to the universal ribosomal protein uS7 family. Part of the 30S ribosomal subunit.

One of the primary rRNA binding proteins, it binds directly to 16S rRNA where it nucleates assembly of the head domain of the 30S subunit. Is located at the subunit interface close to the decoding center. In Methanosarcina barkeri (strain Fusaro / DSM 804), this protein is Small ribosomal subunit protein uS7.